The primary structure comprises 275 residues: Polar tube protein 2 (275 aa).

The N-terminal stretch at M1–S18 is a signal peptide. N132 and N248 each carry an N-linked (GlcNAc...) asparagine glycan. Residues I233–E275 are disordered. Residues Q234–T249 show a composition bias toward basic and acidic residues. A compositionally biased stretch (acidic residues) spans Y253–E263.

Its subcellular location is the spore polar tube. Its function is as follows. Involved in formation of a polar tube through which the infectious agent is passed on to the host cell. The sequence is that of Polar tube protein 2 (PTP2) from Encephalitozoon intestinalis (Microsporidian parasite).